Reading from the N-terminus, the 373-residue chain is Chaperone protein DnaJ (373 aa).

One can recognise a J domain in the interval 5–70 (CYYEVLEVSR…EKRSRYDRFG (66 aa)). Residues 134–212 (GTEVELNIPV…CRGAGYVRKQ (79 aa)) form a CR-type zinc finger. Positions 147, 150, 164, 167, 186, 189, 200, and 203 each coordinate Zn(2+). CXXCXGXG motif repeat units follow at residues 147–154 (CDTCEGSG), 164–171 (CSHCGGRG), 186–193 (CPACNGRG), and 200–207 (CSECRGAG).

The protein belongs to the DnaJ family. In terms of assembly, homodimer. Requires Zn(2+) as cofactor.

It localises to the cytoplasm. In terms of biological role, participates actively in the response to hyperosmotic and heat shock by preventing the aggregation of stress-denatured proteins and by disaggregating proteins, also in an autonomous, DnaK-independent fashion. Unfolded proteins bind initially to DnaJ; upon interaction with the DnaJ-bound protein, DnaK hydrolyzes its bound ATP, resulting in the formation of a stable complex. GrpE releases ADP from DnaK; ATP binding to DnaK triggers the release of the substrate protein, thus completing the reaction cycle. Several rounds of ATP-dependent interactions between DnaJ, DnaK and GrpE are required for fully efficient folding. Also involved, together with DnaK and GrpE, in the DNA replication of plasmids through activation of initiation proteins. The sequence is that of Chaperone protein DnaJ from Maridesulfovibrio salexigens (strain ATCC 14822 / DSM 2638 / NCIMB 8403 / VKM B-1763) (Desulfovibrio salexigens).